Reading from the N-terminus, the 168-residue chain is Scytalone dehydratase arp1 (168 aa).

Substrate contacts are provided by Y29 and Y49. Residues H84 and H109 contribute to the active site. N130 contacts substrate.

Belongs to the scytalone dehydratase family. Homotrimer. Each subunit contains an active site, located in the central part of the hydrophobic core of the monomer, which functions independently.

It localises to the endosome. It carries out the reaction scytalone = 1,3,8-trihydroxynaphthalene + H2O. Its pathway is pigment biosynthesis; melanin biosynthesis. With respect to regulation, fenoxanil inhibits arp1 scytalone dehydratase activity. Its function is as follows. Scytalone dehydratase; part of the gene cluster that mediates the biosynthesis of dihydroxynaphthalene (DHN)-melanin, a bluish-green pigment and a structural component of the conidial wall. The first step of the pathway is the production of the heptaketide naphtopyrone YWA1 by the polyketide synthase alb1 though condensation of acetyl-CoA with malonyl-CoA. The naphtopyrone YWA1 is then converted to the pentaketide 1,3,6,8-tetrahydroxynaphthalene (1,3,6,8-THN) by the heptaketide hydrolyase ayg1 though chain-length shortening. 1,3,6,8-THN is substrate of the hydroxynaphthalene reductase arp2 to yield scytalone. The scytalone dehydratase arp1 then reduces scytalone to 1,3,8-THN. 1,3,8-THN is also substrate of the hydroxynaphthalene reductase arp2 to yield vermelone. Vermelone is further converted by the multicopper oxidase abr1 to 1,8-DHN. Finally the laccase abr2 transforms 1,8-DHN to DHN-melanin. DHN-melanin biosynthesis appears to be initiated in endosomes where early enzymes (abl1, ayg1, arp1 and arp2) localize, with exocytosis leading to melanin deposition on the cell surface where late enzymes (abr1 and abr2) localize. DHN-melanin is an important structural component of the outer cell wall and is required for the presence of conidial surface hydrophobins. DHN-melanin also plays a crucial role in fungal virulence, including a protective role against the host's immune defenses. DHN-melanin also protects conidia against amoeba predation. This Aspergillus fumigatus (strain ATCC MYA-4609 / CBS 101355 / FGSC A1100 / Af293) (Neosartorya fumigata) protein is Scytalone dehydratase arp1.